The following is a 614-amino-acid chain: Type VII secretion system protein EssD (614 aa).

Positions 417–445 are disordered; sequence QNHVTHGPKDSMVRSEGKHSISSHEMNSS. Residues 423-435 are compositionally biased toward basic and acidic residues; that stretch reads GPKDSMVRSEGKH.

It belongs to the EssD family. As to quaternary structure, interacts (via C-terminal) with EssG; this interaction blocks EssD activity. Interacts with EssE.

The protein resides in the secreted. It is found in the cell membrane. In terms of biological role, component of the type VII secretion system (Ess). Plays a role in Ess secretion during infection. Required for the efficient secretion of EsxA. Required for abscess formation and staphylococcal persistence in host tissues. Possesses a toxic DNase activity that is modulated by EsaG by forming a nuclease toxin-antitoxin pair. This nuclease toxin targets competitor bacteria. In Staphylococcus aureus (strain USA300), this protein is Type VII secretion system protein EssD.